The following is a 151-amino-acid chain: 1,4-dihydroxy-2-naphthoyl-CoA hydrolase (151 aa).

Asp19 is a catalytic residue.

The protein belongs to the 4-hydroxybenzoyl-CoA thioesterase family. DHNA-CoA hydrolase subfamily.

The catalysed reaction is 1,4-dihydroxy-2-naphthoyl-CoA + H2O = 1,4-dihydroxy-2-naphthoate + CoA + H(+). It participates in cofactor biosynthesis; phylloquinone biosynthesis. The protein operates within quinol/quinone metabolism; 1,4-dihydroxy-2-naphthoate biosynthesis; 1,4-dihydroxy-2-naphthoate from chorismate: step 7/7. Its function is as follows. Catalyzes the hydrolysis of 1,4-dihydroxy-2-naphthoyl-CoA (DHNA-CoA) to 1,4-dihydroxy-2-naphthoate (DHNA), a reaction involved in phylloquinone (vitamin K1) biosynthesis. The polypeptide is 1,4-dihydroxy-2-naphthoyl-CoA hydrolase (Prochlorococcus marinus (strain MIT 9303)).